The chain runs to 965 residues: FKBP12-associated protein 1 (965 aa).

The RING-type; degenerate zinc-finger motif lies at 68-118; the sequence is CMICTVEMDYTCQMFACKRCYRVFDYGCIREWALKSTEKTVDRIWKCPNCY. NF-X1-type zinc fingers lie at residues 159–177, 216–235, 362–382, 468–487, and 586–606; these read CMHG…ECTR, CSIH…PCPE, CGKH…PCLQ, CGIH…PCLE, and CYHT…VCKQ. The 64-residue stretch at 733–796 folds into the R3H domain; the sequence is ERWCSQIEAI…MRSVFIKKED (64 aa). Residue threonine 951 is modified to Phosphothreonine. Phosphoserine is present on serine 958.

It belongs to the NFX1 family. In terms of assembly, interacts with FPR1.

It localises to the cytoplasm. Its subcellular location is the nucleus. May play a role in transcription regulation. The polypeptide is FKBP12-associated protein 1 (FAP1) (Saccharomyces cerevisiae (strain ATCC 204508 / S288c) (Baker's yeast)).